The sequence spans 119 residues: Large ribosomal subunit protein uL18 (119 aa).

Belongs to the universal ribosomal protein uL18 family. Part of the 50S ribosomal subunit; part of the 5S rRNA/L5/L18/L25 subcomplex. Contacts the 5S and 23S rRNAs.

This is one of the proteins that bind and probably mediate the attachment of the 5S RNA into the large ribosomal subunit, where it forms part of the central protuberance. This is Large ribosomal subunit protein uL18 from Cupriavidus taiwanensis (strain DSM 17343 / BCRC 17206 / CCUG 44338 / CIP 107171 / LMG 19424 / R1) (Ralstonia taiwanensis (strain LMG 19424)).